Reading from the N-terminus, the 680-residue chain is WD repeat-containing protein 48 homolog (680 aa).

WD repeat units lie at residues 26–65 (QHRN…SEKY), 71–110 (HHND…CMST), 113–152 (THRD…ALTA), 164–203 (GSKD…RIMK), 206–245 (GHTE…CVQT), 248–287 (VHKE…NKTL), 290–329 (EEQA…RCTL), and 350–389 (KGGA…KKEQ). Residues 592–616 (ETTPSGGNANNSLQNSQSDANSEGS) are disordered.

It belongs to the WD repeat WDR48 family. Catalytic component of the Usp12-46 deubiquitylase complex consisting of Usp12-46, Wdr20 and Uaf1; regulatory subunit that, together wtih Wdr20, stabilizes Usp12-46. The Usp12-46 deubiquitylase complex associates with arr/arrow; the interaction leads to deubiquitination and stabilization of arr/arrow.

Its function is as follows. Regulatory component of the Usp12-46 deubiquitylase complex. activates deubiquitination by increasing the catalytic turnover without increasing the affinity of deubiquitinating enzymes for the substrate. The complex deubiquitylates the wg/wingless-signaling receptor arr/arrow, which stabilizes the receptor and increases its concentration at the cell surface; this enhances the sensitivity of cells to wg/wingless-signal stimulation. This increases the amplitude and spatial range of the signaling response to the wg/wingless morphogen gradient, facilitating the precise concentration-dependent regulation of its target genes. Together with Wdr20 and Usp12-46 required for wg/wingless-mediated signaling in the wing imaginal disc and for wg/wingless-dependent regulation of intestinal stem cell proliferation. The chain is WD repeat-containing protein 48 homolog from Drosophila sechellia (Fruit fly).